The following is a 254-amino-acid chain: Type III pantothenate kinase (254 aa).

13–20 (MIGNTRQH) contributes to the ATP binding site. Substrate contacts are provided by residues tyrosine 84 and 88-91 (GLDR). The active-site Proton acceptor is the aspartate 90. K(+) is bound at residue aspartate 110. Threonine 113 serves as a coordination point for ATP. Threonine 166 is a binding site for substrate.

This sequence belongs to the type III pantothenate kinase family. In terms of assembly, homodimer. NH4(+) serves as cofactor. It depends on K(+) as a cofactor.

The protein resides in the cytoplasm. It catalyses the reaction (R)-pantothenate + ATP = (R)-4'-phosphopantothenate + ADP + H(+). The protein operates within cofactor biosynthesis; coenzyme A biosynthesis; CoA from (R)-pantothenate: step 1/5. Catalyzes the phosphorylation of pantothenate (Pan), the first step in CoA biosynthesis. This Thermosynechococcus vestitus (strain NIES-2133 / IAM M-273 / BP-1) protein is Type III pantothenate kinase.